Here is a 392-residue protein sequence, read N- to C-terminus: Putative nicotinate phosphoribosyltransferase (392 aa).

Nicotinate-binding residues include tyrosine 21, phenylalanine 138, and threonine 179. A Phosphohistidine modification is found at histidine 182. Arginine 235 lines the nicotinate pocket. The 5-phospho-alpha-D-ribose 1-diphosphate site is built by serine 240, glycine 272, and threonine 293. Zn(2+)-binding residues include cysteine 330, cysteine 333, cysteine 348, and cysteine 350.

The protein belongs to the NAPRTase family. Highly divergent. In terms of assembly, homodimer. Forms a trimer of dimers in the crystal. Post-translationally, transiently phosphorylated on a His residue during the reaction cycle. Phosphorylation strongly increases the affinity for substrates and increases the rate of nicotinate D-ribonucleotide production. Dephosphorylation regenerates the low-affinity form of the enzyme, leading to product release.

It carries out the reaction nicotinate + 5-phospho-alpha-D-ribose 1-diphosphate + ATP + H2O = nicotinate beta-D-ribonucleotide + ADP + phosphate + diphosphate. Its pathway is cofactor biosynthesis; NAD(+) biosynthesis; nicotinate D-ribonucleotide from nicotinate: step 1/1. Functionally, catalyzes the synthesis of beta-nicotinate D-ribonucleotide from nicotinate and 5-phospho-D-ribose 1-phosphate at the expense of ATP. This Thermoplasma acidophilum (strain ATCC 25905 / DSM 1728 / JCM 9062 / NBRC 15155 / AMRC-C165) protein is Putative nicotinate phosphoribosyltransferase.